The following is a 200-amino-acid chain: UPF0301 protein BruAb1_0502 (200 aa).

This sequence belongs to the UPF0301 (AlgH) family.

The polypeptide is UPF0301 protein BruAb1_0502 (Brucella abortus biovar 1 (strain 9-941)).